A 302-amino-acid polypeptide reads, in one-letter code: GrpE protein homolog 1, mitochondrial (302 aa).

A mitochondrion-targeting transit peptide spans 1–39; the sequence is MLVSRVLSRVSRSAGLRSSFSSVVTPKRNQIPIVASRFH. The interval 77–97 is disordered; sequence SAEPKGNESNTEVPKTGETSE.

Belongs to the GrpE family. As to quaternary structure, probable component of the PAM complex, at least composed of SSC1 (mtHsp70), MGE1, TIM44, PAM16/TIM16, PAM17 and PAM18/TIM14. Interacts with SSQ1.

Its subcellular location is the mitochondrion matrix. Essential component of the PAM complex, a complex required for the translocation of transit peptide-containing proteins from the inner membrane into the mitochondrial matrix in an ATP-dependent manner. Seems to control the nucleotide-dependent binding of mitochondrial HSP70 to substrate proteins. Binds ATP. Interacts with copper ions Cu(2+). This chain is GrpE protein homolog 1, mitochondrial, found in Arabidopsis thaliana (Mouse-ear cress).